The chain runs to 217 residues: Adenylate kinase (217 aa).

10–15 (GAGKGT) contributes to the ATP binding site. The tract at residues 30 to 59 (STGDIFRQNLRDNTDLGKLAKEYMDKGLLV) is NMP. Residues threonine 31, arginine 36, 57-59 (LLV), 85-88 (GYPR), and glutamine 92 contribute to the AMP site. An LID region spans residues 126–163 (GRRVCPNCGATYHIKTSPPAVDNVCDKCGAQLIQRSDD). Arginine 127 contributes to the ATP binding site. Zn(2+) is bound by residues cysteine 130 and cysteine 133. 136 to 137 (TY) contacts ATP. 2 residues coordinate Zn(2+): cysteine 150 and cysteine 153. AMP-binding residues include arginine 160 and arginine 171. Lysine 199 lines the ATP pocket.

Belongs to the adenylate kinase family. Monomer.

It is found in the cytoplasm. The enzyme catalyses AMP + ATP = 2 ADP. The protein operates within purine metabolism; AMP biosynthesis via salvage pathway; AMP from ADP: step 1/1. Functionally, catalyzes the reversible transfer of the terminal phosphate group between ATP and AMP. Plays an important role in cellular energy homeostasis and in adenine nucleotide metabolism. The chain is Adenylate kinase from Thermoanaerobacter pseudethanolicus (strain ATCC 33223 / 39E) (Clostridium thermohydrosulfuricum).